Reading from the N-terminus, the 205-residue chain is Large ribosomal subunit protein uL18 (205 aa).

It belongs to the universal ribosomal protein uL18 family. As to quaternary structure, part of the 50S ribosomal subunit. Contacts the 5S and 23S rRNAs.

Functionally, this is one of the proteins that bind and probably mediate the attachment of the 5S RNA into the large ribosomal subunit, where it forms part of the central protuberance. The sequence is that of Large ribosomal subunit protein uL18 from Pyrobaculum arsenaticum (strain DSM 13514 / JCM 11321 / PZ6).